The following is a 78-amino-acid chain: Acyl carrier protein (78 aa).

Residues 2–77 (STIEERVKKI…EAIDYINAHA (76 aa)) enclose the Carrier domain. Position 37 is an O-(pantetheine 4'-phosphoryl)serine (Ser37).

It belongs to the acyl carrier protein (ACP) family. 4'-phosphopantetheine is transferred from CoA to a specific serine of apo-ACP by AcpS. This modification is essential for activity because fatty acids are bound in thioester linkage to the sulfhydryl of the prosthetic group.

The protein localises to the cytoplasm. Its pathway is lipid metabolism; fatty acid biosynthesis. Its function is as follows. Carrier of the growing fatty acid chain in fatty acid biosynthesis. In Stutzerimonas stutzeri (strain A1501) (Pseudomonas stutzeri), this protein is Acyl carrier protein.